A 162-amino-acid polypeptide reads, in one-letter code: MRIGHGFDVHKFGENGSGPLIIGGVRIPYEKGLLAHSDGDVALHAATDALLGAAALGDIGKLFPDTDPAFKGADSRGLLREAYRCILAKGYKLGNLDITIIAQAPKMAPHIPQMRVNLAEDLQCHMDDINVKATTTEQLGFTGRGEGIACEAVVLLVNVEQG.

The a divalent metal cation site is built by aspartate 8 and histidine 10. Residues 8-10 (DVH) and 36-37 (HS) contribute to the 4-CDP-2-C-methyl-D-erythritol 2-phosphate site. Residue histidine 44 participates in a divalent metal cation binding. Residues 58–60 (DIG), 63–67 (FPDTD), 102–108 (AQAPKMA), 134–137 (TTTE), phenylalanine 141, and arginine 144 contribute to the 4-CDP-2-C-methyl-D-erythritol 2-phosphate site.

It belongs to the IspF family. As to quaternary structure, homotrimer. The cofactor is a divalent metal cation.

It carries out the reaction 4-CDP-2-C-methyl-D-erythritol 2-phosphate = 2-C-methyl-D-erythritol 2,4-cyclic diphosphate + CMP. It functions in the pathway isoprenoid biosynthesis; isopentenyl diphosphate biosynthesis via DXP pathway; isopentenyl diphosphate from 1-deoxy-D-xylulose 5-phosphate: step 4/6. In terms of biological role, involved in the biosynthesis of isopentenyl diphosphate (IPP) and dimethylallyl diphosphate (DMAPP), two major building blocks of isoprenoid compounds. Catalyzes the conversion of 4-diphosphocytidyl-2-C-methyl-D-erythritol 2-phosphate (CDP-ME2P) to 2-C-methyl-D-erythritol 2,4-cyclodiphosphate (ME-CPP) with a corresponding release of cytidine 5-monophosphate (CMP). The chain is 2-C-methyl-D-erythritol 2,4-cyclodiphosphate synthase from Yersinia pseudotuberculosis serotype IB (strain PB1/+).